A 211-amino-acid chain; its full sequence is Protein-L-isoaspartate O-methyltransferase (211 aa).

The active site involves Ser-59.

This sequence belongs to the methyltransferase superfamily. L-isoaspartyl/D-aspartyl protein methyltransferase family.

Its subcellular location is the cytoplasm. The catalysed reaction is [protein]-L-isoaspartate + S-adenosyl-L-methionine = [protein]-L-isoaspartate alpha-methyl ester + S-adenosyl-L-homocysteine. Catalyzes the methyl esterification of L-isoaspartyl residues in peptides and proteins that result from spontaneous decomposition of normal L-aspartyl and L-asparaginyl residues. It plays a role in the repair and/or degradation of damaged proteins. This Ignicoccus hospitalis (strain KIN4/I / DSM 18386 / JCM 14125) protein is Protein-L-isoaspartate O-methyltransferase.